Reading from the N-terminus, the 306-residue chain is Protoheme IX farnesyltransferase (306 aa).

Helical transmembrane passes span 31–50 (VIEL…QGGW), 55–77 (LILG…NCYI), 104–124 (LVFA…ISNW), 125–145 (LAAA…TLWL), 168–188 (WAAV…IVFL), 218–235 (GRAA…ATLA), 238–258 (LLLI…LAGG), and 286–306 (ASIS…LLPF).

It belongs to the UbiA prenyltransferase family. Protoheme IX farnesyltransferase subfamily.

It localises to the cell membrane. It catalyses the reaction heme b + (2E,6E)-farnesyl diphosphate + H2O = Fe(II)-heme o + diphosphate. Its pathway is porphyrin-containing compound metabolism; heme O biosynthesis; heme O from protoheme: step 1/1. Functionally, converts heme B (protoheme IX) to heme O by substitution of the vinyl group on carbon 2 of heme B porphyrin ring with a hydroxyethyl farnesyl side group. The polypeptide is Protoheme IX farnesyltransferase (Clavibacter michiganensis subsp. michiganensis (strain NCPPB 382)).